The primary structure comprises 794 residues: Ent-copalyl diphosphate synthase 2 (794 aa).

Residues 1–35 (MSSSSNVTSLPRLTTAGGVFPREMVRVHSSCNILR) constitute a chloroplast transit peptide. Lys-238 is a substrate binding site. Mg(2+)-binding residues include Asp-369 and Asp-371. Residues 369–372 (DVDD) carry the DXDD motif motif. Substrate is bound at residue Lys-455.

The protein belongs to the terpene synthase family. Tpsc subfamily. The cofactor is Mg(2+). As to expression, expressed in leaves.

The protein resides in the plastid. The protein localises to the chloroplast. It catalyses the reaction (2E,6E,10E)-geranylgeranyl diphosphate = ent-copalyl diphosphate. It participates in secondary metabolite biosynthesis; terpenoid biosynthesis. Functionally, involved in the biosynthesis of ent-kaurene diterpenoids natural products such as oridonin, miltiradiene, eriocalyxin B and nezukol, known to exhibit antitumor, anti-inflammatory and antibacterial activities. Catalyzes the conversion of (2E,6E,10E)-geranylgeranyl diphosphate (GGPP) to ent-copalyl diphosphate (ent-CPP). This is Ent-copalyl diphosphate synthase 2 from Isodon eriocalyx (Plectranthus eriocalyx).